A 475-amino-acid polypeptide reads, in one-letter code: Protein arginine N-methyltransferase 2 (475 aa).

The tract at residues 167–194 (EFLSDDDDEEMDVDDDEEDESRDGEETG) is disordered. Positions 169–194 (LSDDDDEEMDVDDDEEDESRDGEETG) are enriched in acidic residues. Positions 247–475 (LAGSQMDYLK…EDFYLPVCTF (229 aa)) constitute an RMT2 domain. S-adenosyl-L-methionine contacts are provided by residues Tyr254, Met285, 310–315 (FGLGII), 331–333 (EAH), 358–359 (WQ), and Asp378.

It belongs to the class I-like SAM-binding methyltransferase superfamily. RMT2 methyltransferase family. In terms of assembly, monomer.

Its subcellular location is the cytoplasm. It is found in the nucleus. In terms of biological role, S-adenosyl-L-methionine-dependent protein-arginine N-methyltransferase that methylates the delta-nitrogen atom of arginine residues to form N5-methylarginine (type IV) in target proteins. Monomethylates ribosomal protein L12. The chain is Protein arginine N-methyltransferase 2 from Yarrowia lipolytica (strain CLIB 122 / E 150) (Yeast).